Here is a 155-residue protein sequence, read N- to C-terminus: Small ribosomal subunit protein uS7cz/uS7cy (155 aa).

Belongs to the universal ribosomal protein uS7 family. In terms of assembly, part of the 30S ribosomal subunit.

It localises to the plastid. The protein resides in the chloroplast. In terms of biological role, one of the primary rRNA binding proteins, it binds directly to 16S rRNA where it nucleates assembly of the head domain of the 30S subunit. In Cucumis sativus (Cucumber), this protein is Small ribosomal subunit protein uS7cz/uS7cy (rps7-A).